Consider the following 223-residue polypeptide: Urease subunit alpha (223 aa).

Positions 1–101 (MHFTQQQLQR…LVTIHEPIAN (101 aa)) are urease gamma. The urease beta stretch occupies residues 102–223 (DDKIKAGEIF…LSKAKEKGFL (122 aa)).

The protein in the N-terminal section; belongs to the urease gamma subunit family. It in the C-terminal section; belongs to the urease beta subunit family. In terms of assembly, heterohexamer of 3 UreA (alpha) and 3 UreB (beta) subunits.

It is found in the cytoplasm. It carries out the reaction urea + 2 H2O + H(+) = hydrogencarbonate + 2 NH4(+). Its pathway is nitrogen metabolism; urea degradation; CO(2) and NH(3) from urea (urease route): step 1/1. In Campylobacter lari, this protein is Urease subunit alpha.